A 161-amino-acid chain; its full sequence is MPSFDIVSEVDKQEIRNAVDQLNKEVSTRFDFKGSDARAEQTDYELYLYADDEFKLGQVMDILMTKFTKREIDVRCLEKGQTEKISGNKVKQKVTVKTGVESDLAKKIIKLVKDSKLKVQASIQGEVVRVTGAKRDILQEAIQLVKGSITELPLQFRNFRD.

Belongs to the YajQ family.

In terms of biological role, nucleotide-binding protein. This Nitrosomonas europaea (strain ATCC 19718 / CIP 103999 / KCTC 2705 / NBRC 14298) protein is Nucleotide-binding protein NE2248.